The primary structure comprises 197 residues: Gastrula zinc finger protein XlCGF17.1 (197 aa).

C2H2-type zinc fingers lie at residues 6-28 (ISCS…QMTH), 34-56 (YSCS…QKIH), 62-84 (FSCS…HRTH), 90-112 (FFCS…RRTH), 118-140 (FSCS…YRTH), 146-169 (FSCS…RRSH), and 175-197 (FSCS…LRTH).

This sequence belongs to the krueppel C2H2-type zinc-finger protein family.

It localises to the nucleus. May be involved in transcriptional regulation. The protein is Gastrula zinc finger protein XlCGF17.1 of Xenopus laevis (African clawed frog).